Reading from the N-terminus, the 79-residue chain is uncharacterized protein (79 aa).

This is an uncharacterized protein from Haemophilus influenzae (strain ATCC 51907 / DSM 11121 / KW20 / Rd).